A 394-amino-acid chain; its full sequence is Choline/ethanolamine kinase (394 aa).

N-acetylalanine is present on alanine 2. The interval 22-42 (GLLDAKCPEPIPNRRRSSSLS) is disordered. ATP-binding positions include 75 to 81 (SGGLSNL), arginine 104, 146 to 152 (QYLPSRP), glutamine 244, and aspartate 264. Residue 77–79 (GLS) coordinates substrate.

This sequence belongs to the choline/ethanolamine kinase family. As to quaternary structure, homodimer, and heterodimer with CHKA.

The enzyme catalyses choline + ATP = phosphocholine + ADP + H(+). It carries out the reaction ethanolamine + ATP = phosphoethanolamine + ADP + H(+). Its pathway is phospholipid metabolism; phosphatidylethanolamine biosynthesis; phosphatidylethanolamine from ethanolamine: step 1/3. Has a key role in phospholipid metabolism, and catalyzes the first step of phosphatidylethanolamine and phosphatidylcholine biosynthesis. In Rattus norvegicus (Rat), this protein is Choline/ethanolamine kinase (Chkb).